Reading from the N-terminus, the 519-residue chain is Cytochrome P450 monooxygenase easM (519 aa).

The helical transmembrane segment at 16–33 (VAPALFASSISVLFLILS) threads the bilayer. N-linked (GlcNAc...) asparagine glycosylation is found at asparagine 50 and asparagine 353. Cysteine 458 lines the heme pocket.

This sequence belongs to the cytochrome P450 family. The cofactor is heme.

Its subcellular location is the membrane. It functions in the pathway alkaloid biosynthesis; ergot alkaloid biosynthesis. In terms of biological role, cytochrome P450 monooxygenase; part of the gene cluster that mediates the biosynthesis of fumiclavanine C, a fungal ergot alkaloid. DmaW catalyzes the first step of ergot alkaloid biosynthesis by condensing dimethylallyl diphosphate (DMAP) and tryptophan to form 4-dimethylallyl-L-tryptophan. The second step is catalyzed by the methyltransferase easF that methylates 4-dimethylallyl-L-tryptophan in the presence of S-adenosyl-L-methionine, resulting in the formation of 4-dimethylallyl-L-abrine. The catalase easC and the FAD-dependent oxidoreductase easE then transform 4-dimethylallyl-L-abrine to chanoclavine-I which is further oxidized by EasD in the presence of NAD(+), resulting in the formation of chanoclavine-I aldehyde. EasA reduces chanoclavine-I aldehyde to dihydrochanoclavine-I aldehyde that spontaneously dehydrates to form 6,8-dimethyl-6,7-didehydroergoline. EasG then catalyzes the reduction of 6,8-dimethyl-6,7-didehydroergoline to form festuclavine. Hydrolysis of festuclavine by easM then leads to the formation of fumigaclavine B which is in turn acetylated by easN to fumigaclavine A. Finally, easL catalyzes the conversion of fumigaclavine A into fumigaclavine C by attaching a dimethylallyl moiety to C-2 of the indole nucleus. This chain is Cytochrome P450 monooxygenase easM, found in Aspergillus fumigatus (strain ATCC MYA-4609 / CBS 101355 / FGSC A1100 / Af293) (Neosartorya fumigata).